The chain runs to 195 residues: Nucleoid occlusion factor SlmA (195 aa).

Residues 7 to 67 (TNRRAQILQA…GLIEFIEETL (61 aa)) enclose the HTH tetR-type domain. A DNA-binding region (H-T-H motif) is located at residues 30-49 (TTAKLAEKVGVSEAALYRHF). Positions 109–141 (DALMGEQDRLRARIAKLFERLETQLKQVLRERK) form a coiled coil.

It belongs to the nucleoid occlusion factor SlmA family. As to quaternary structure, homodimer. Interacts with FtsZ.

The protein resides in the cytoplasm. The protein localises to the nucleoid. Its function is as follows. Required for nucleoid occlusion (NO) phenomenon, which prevents Z-ring formation and cell division over the nucleoid. Acts as a DNA-associated cell division inhibitor that binds simultaneously chromosomal DNA and FtsZ, and disrupts the assembly of FtsZ polymers. SlmA-DNA-binding sequences (SBS) are dispersed on non-Ter regions of the chromosome, preventing FtsZ polymerization at these regions. The chain is Nucleoid occlusion factor SlmA from Alteromonas mediterranea (strain DSM 17117 / CIP 110805 / LMG 28347 / Deep ecotype).